A 344-amino-acid polypeptide reads, in one-letter code: Phosphoribosylformylglycinamidine cyclo-ligase (344 aa).

This sequence belongs to the AIR synthase family.

The protein resides in the cytoplasm. It carries out the reaction 2-formamido-N(1)-(5-O-phospho-beta-D-ribosyl)acetamidine + ATP = 5-amino-1-(5-phospho-beta-D-ribosyl)imidazole + ADP + phosphate + H(+). It participates in purine metabolism; IMP biosynthesis via de novo pathway; 5-amino-1-(5-phospho-D-ribosyl)imidazole from N(2)-formyl-N(1)-(5-phospho-D-ribosyl)glycinamide: step 2/2. The sequence is that of Phosphoribosylformylglycinamidine cyclo-ligase from Glaesserella parasuis serovar 5 (strain SH0165) (Haemophilus parasuis).